Here is a 203-residue protein sequence, read N- to C-terminus: MKRLYLVRHAQSEYNEKGIFQGRLDSDLTPLGFVQARLLAREFLKKKVDIIYSSPQRRAYKTALTISDMLGTQLVVDERLREMSFGEYEGKHFWSMLEAHKDVFLNWLSNPVKHPLPTQESMEEFEKRVRSFLEDVKSSHYQNMLIVAHGGTLHAIVCLLTGIGLENLWNIHMDNAGITEIHMEGEKSTLVYLNKLCHTRQLT.

H9 functions as the Tele-phosphohistidine intermediate in the catalytic mechanism. H149 is an active-site residue.

It belongs to the histidine phosphatase superfamily. Metal-independent phosphoserine phosphatase family. In terms of assembly, heterodimer with PspA. The PspB subunit appears to have no or considerably lower PSP activity compared with that of PspA.

The catalysed reaction is O-phospho-L-serine + H2O = L-serine + phosphate. It carries out the reaction O-phospho-D-serine + H2O = D-serine + phosphate. It participates in amino-acid biosynthesis; L-serine biosynthesis; L-serine from 3-phospho-D-glycerate: step 3/3. Its activity is regulated as follows. Activity is not inhibited by EDTA in vitro, nor enhanced by the addition of Mg(2+). Part of a complex that catalyzes the dephosphorylation of L-phosphoserine to serine and inorganic phosphate. Is poorly or not active toward D-phosphoserine, DL-phosphothreonine, 3-phosphoglycerate, para-nitrophenylphosphate, and fructose-6-phosphate. Does not display phosphoglycerate mutase activity. In Hydrogenobacter thermophilus (strain DSM 6534 / IAM 12695 / TK-6), this protein is Putative phosphoserine phosphatase 2 (pspB).